The primary structure comprises 201 residues: Increased recombination centers protein 21 (201 aa).

The Cytochrome b5 heme-binding domain occupies 122 to 200 (PLRINRKIVK…LQVCFIGVVC (79 aa)). Residues histidine 158 and histidine 182 each coordinate heme.

It belongs to the cytochrome b5 family.

Functionally, involved in resistance to carboplatin and cisplatin. Is probably involved in a pathway contributing to genomic integrity. The sequence is that of Increased recombination centers protein 21 (IRC21) from Saccharomyces cerevisiae (strain ATCC 204508 / S288c) (Baker's yeast).